Here is a 429-residue protein sequence, read N- to C-terminus: Ribosomal RNA small subunit methyltransferase B (429 aa).

Residues 254–260 (CAAPGGK), Asp277, Asp303, and Asp322 each bind S-adenosyl-L-methionine. Catalysis depends on Cys375, which acts as the Nucleophile.

It belongs to the class I-like SAM-binding methyltransferase superfamily. RsmB/NOP family.

It is found in the cytoplasm. The enzyme catalyses cytidine(967) in 16S rRNA + S-adenosyl-L-methionine = 5-methylcytidine(967) in 16S rRNA + S-adenosyl-L-homocysteine + H(+). Functionally, specifically methylates the cytosine at position 967 (m5C967) of 16S rRNA. In Shigella boydii serotype 4 (strain Sb227), this protein is Ribosomal RNA small subunit methyltransferase B.